A 517-amino-acid chain; its full sequence is Cytochrome P450 1A1 (517 aa).

Residues 34–45 (WQPRVPKGLKSP) form a mitochondrial targeting signal region. An O-linked (GlcNAc) serine glycan is attached at serine 72. Residue phenylalanine 229 coordinates substrate. Cysteine 462 contacts heme.

Belongs to the cytochrome P450 family. Interacts with cytosolic chaperones HSP70 and HSP90; this interaction is required for initial targeting to mitochondria. Interacts (via mitochondrial targeting signal) with TOMM40 (via N-terminus); this interaction is required for translocation across the mitochondrial outer membrane. Requires heme as cofactor.

It is found in the endoplasmic reticulum membrane. Its subcellular location is the mitochondrion inner membrane. It localises to the microsome membrane. The protein localises to the cytoplasm. It catalyses the reaction an organic molecule + reduced [NADPH--hemoprotein reductase] + O2 = an alcohol + oxidized [NADPH--hemoprotein reductase] + H2O + H(+). The catalysed reaction is estrone + reduced [NADPH--hemoprotein reductase] + O2 = 2-hydroxyestrone + oxidized [NADPH--hemoprotein reductase] + H2O + H(+). It carries out the reaction estrone + reduced [NADPH--hemoprotein reductase] + O2 = 4-hydroxyestrone + oxidized [NADPH--hemoprotein reductase] + H2O + H(+). The enzyme catalyses estrone + reduced [NADPH--hemoprotein reductase] + O2 = 6alpha-hydroxyestrone + oxidized [NADPH--hemoprotein reductase] + H2O + H(+). It catalyses the reaction estrone + reduced [NADPH--hemoprotein reductase] + O2 = 15alpha-hydroxyestrone + oxidized [NADPH--hemoprotein reductase] + H2O + H(+). The catalysed reaction is estrone + reduced [NADPH--hemoprotein reductase] + O2 = 16alpha-hydroxyestrone + oxidized [NADPH--hemoprotein reductase] + H2O + H(+). It carries out the reaction 17beta-estradiol + reduced [NADPH--hemoprotein reductase] + O2 = 2-hydroxy-17beta-estradiol + oxidized [NADPH--hemoprotein reductase] + H2O + H(+). The enzyme catalyses 17beta-estradiol + reduced [NADPH--hemoprotein reductase] + O2 = 4-hydroxy-17beta-estradiol + oxidized [NADPH--hemoprotein reductase] + H2O + H(+). It catalyses the reaction 17beta-estradiol + reduced [NADPH--hemoprotein reductase] + O2 = 6alpha-hydroxy-17beta-estradiol + oxidized [NADPH--hemoprotein reductase] + H2O + H(+). The catalysed reaction is 17beta-estradiol + reduced [NADPH--hemoprotein reductase] + O2 = 7alpha-hydroxy-17beta-estradiol + oxidized [NADPH--hemoprotein reductase] + H2O + H(+). It carries out the reaction 17beta-estradiol + reduced [NADPH--hemoprotein reductase] + O2 = 15alpha-hydroxy-17beta-estradiol + oxidized [NADPH--hemoprotein reductase] + H2O + H(+). The enzyme catalyses (5Z,8Z,11Z)-eicosatrienoate + reduced [NADPH--hemoprotein reductase] + O2 = 19-hydroxy-(5Z,8Z,11Z)-eicosatrienoate + oxidized [NADPH--hemoprotein reductase] + H2O + H(+). It catalyses the reaction (5Z,8Z,11Z,14Z)-eicosatetraenoate + reduced [NADPH--hemoprotein reductase] + O2 = 16-hydroxy-(5Z,8Z,11Z,14Z)-eicosatetraenoate + oxidized [NADPH--hemoprotein reductase] + H2O + H(+). The catalysed reaction is (5Z,8Z,11Z,14Z)-eicosatetraenoate + reduced [NADPH--hemoprotein reductase] + O2 = 17-hydroxy-(5Z,8Z,11Z,14Z)-eicosatetraenoate + oxidized [NADPH--hemoprotein reductase] + H2O + H(+). It carries out the reaction (5Z,8Z,11Z,14Z)-eicosatetraenoate + reduced [NADPH--hemoprotein reductase] + O2 = 18-hydroxy-(5Z,8Z,11Z,14Z)-eicosatetraenoate + oxidized [NADPH--hemoprotein reductase] + H2O + H(+). The enzyme catalyses (5Z,8Z,11Z,14Z)-eicosatetraenoate + reduced [NADPH--hemoprotein reductase] + O2 = 19-hydroxy-(5Z,8Z,11Z,14Z)-eicosatetraenoate + oxidized [NADPH--hemoprotein reductase] + H2O + H(+). It catalyses the reaction (5Z,8Z,11Z,14Z,17Z)-eicosapentaenoate + reduced [NADPH--hemoprotein reductase] + O2 = 19-hydroxy-(5Z,8Z,11Z,14Z,17Z)-eicosapentaenoate + oxidized [NADPH--hemoprotein reductase] + H2O + H(+). The catalysed reaction is (5Z,8Z,11Z,14Z)-eicosatetraenoate + reduced [NADPH--hemoprotein reductase] + O2 = (8R,9S)-epoxy-(5Z,11Z,14Z)-eicosatrienoate + oxidized [NADPH--hemoprotein reductase] + H2O + H(+). It carries out the reaction (5Z,8Z,11Z,14Z)-eicosatetraenoate + reduced [NADPH--hemoprotein reductase] + O2 = (11R,12S)-epoxy-(5Z,8Z,14Z)-eicosatrienoate + oxidized [NADPH--hemoprotein reductase] + H2O + H(+). The enzyme catalyses (5Z,8Z,11Z,14Z)-eicosatetraenoate + reduced [NADPH--hemoprotein reductase] + O2 = (14S,15R)-epoxy-(5Z,8Z,11Z)-eicosatrienoate + oxidized [NADPH--hemoprotein reductase] + H2O + H(+). It catalyses the reaction (5Z,8Z,11Z,14Z)-eicosatetraenoate + reduced [NADPH--hemoprotein reductase] + O2 = (14R,15S)-epoxy-(5Z,8Z,11Z)-eicosatrienoate + oxidized [NADPH--hemoprotein reductase] + H2O + H(+). The catalysed reaction is (5Z,8Z,11Z,14Z,17Z)-eicosapentaenoate + reduced [NADPH--hemoprotein reductase] + O2 = (17R,18S)-epoxy-(5Z,8Z,11Z,14Z)-eicosatetraenoate + oxidized [NADPH--hemoprotein reductase] + H2O + H(+). It carries out the reaction (4Z,7Z,10Z,13Z,16Z,19Z)-docosahexaenoate + reduced [NADPH--hemoprotein reductase] + O2 = (19S,20R)-epoxy-(4Z,7Z,10Z,13Z,16Z)-docosapentaenoate + oxidized [NADPH--hemoprotein reductase] + H2O + H(+). The enzyme catalyses (4Z,7Z,10Z,13Z,16Z,19Z)-docosahexaenoate + reduced [NADPH--hemoprotein reductase] + O2 = (19R,20S)-epoxy-(4Z,7Z,10Z,13Z,16Z)-docosapentaenoate + oxidized [NADPH--hemoprotein reductase] + H2O + H(+). It catalyses the reaction all-trans-retinol + reduced [NADPH--hemoprotein reductase] + O2 = all-trans-retinal + oxidized [NADPH--hemoprotein reductase] + 2 H2O + H(+). The catalysed reaction is all-trans-retinal + reduced [NADPH--hemoprotein reductase] + O2 = all-trans-retinoate + oxidized [NADPH--hemoprotein reductase] + H2O + 2 H(+). It carries out the reaction (13S)-hydroperoxy-(9Z,11E)-octadecadienoate = 13-oxo-(9Z,11E)-octadecadienoate + H2O. The enzyme catalyses (12S)-hydroperoxy-(5Z,8Z,10E,14Z)-eicosatetraenoate = 12-oxo-(5Z,8Z,10E,14Z)-eicosatetraenoate + H2O. It catalyses the reaction (15S)-hydroperoxy-(5Z,8Z,11Z,13E)-eicosatetraenoate = 15-oxo-(5Z,8Z,11Z,13E)-eicosatetraenoate + H2O. The catalysed reaction is (5S)-hydroperoxy-(6E,8Z,11Z,14Z)-eicosatetraenoate = 5-oxo-(6E,8Z,11Z,14Z)-eicosatetraenoate + H2O. It functions in the pathway steroid hormone biosynthesis. Its pathway is lipid metabolism; fatty acid metabolism. It participates in cofactor metabolism; retinol metabolism. A cytochrome P450 monooxygenase involved in the metabolism of various endogenous substrates, including fatty acids, steroid hormones and vitamins. Mechanistically, uses molecular oxygen inserting one oxygen atom into a substrate, and reducing the second into a water molecule, with two electrons provided by NADPH via cytochrome P450 reductase (CPR; NADPH-ferrihemoprotein reductase). Catalyzes the hydroxylation of carbon-hydrogen bonds. Exhibits high catalytic activity for the formation of hydroxyestrogens from estrone (E1) and 17beta-estradiol (E2), namely 2-hydroxy E1 and E2, as well as D-ring hydroxylated E1 and E2 at the C15alpha and C16alpha positions. Displays different regioselectivities for polyunsaturated fatty acids (PUFA) hydroxylation. Catalyzes the epoxidation of double bonds of certain PUFA. Converts arachidonic acid toward epoxyeicosatrienoic acid (EET) regioisomers, 8,9-, 11,12-, and 14,15-EET, that function as lipid mediators in the vascular system. Displays an absolute stereoselectivity in the epoxidation of eicosapentaenoic acid (EPA) producing the 17(R),18(S) enantiomer. May play an important role in all-trans retinoic acid biosynthesis in extrahepatic tissues. Catalyzes two successive oxidative transformation of all-trans retinol to all-trans retinal and then to the active form all-trans retinoic acid. May also participate in eicosanoids metabolism by converting hydroperoxide species into oxo metabolites (lipoxygenase-like reaction, NADPH-independent). The sequence is that of Cytochrome P450 1A1 (CYP1A1) from Felis catus (Cat).